A 500-amino-acid polypeptide reads, in one-letter code: tRNA modification GTPase MnmE (500 aa).

Residues Arg24, Glu120, and Lys159 each coordinate (6S)-5-formyl-5,6,7,8-tetrahydrofolate. Residues 256–420 enclose the TrmE-type G domain; it reads GIPVAIIGET…LEKKLVQAAA (165 aa). Asn266 lines the K(+) pocket. GTP-binding positions include 266 to 271, 285 to 291, and 310 to 313; these read NAGKST, SDIHGTT, and DTAG. Ser270 is a Mg(2+) binding site. Positions 285, 287, and 290 each coordinate K(+). Mg(2+) is bound at residue Thr291. Residue Lys500 participates in (6S)-5-formyl-5,6,7,8-tetrahydrofolate binding.

This sequence belongs to the TRAFAC class TrmE-Era-EngA-EngB-Septin-like GTPase superfamily. TrmE GTPase family. As to quaternary structure, homodimer. Heterotetramer of two MnmE and two MnmG subunits. K(+) serves as cofactor.

The protein resides in the cytoplasm. Functionally, exhibits a very high intrinsic GTPase hydrolysis rate. Involved in the addition of a carboxymethylaminomethyl (cmnm) group at the wobble position (U34) of certain tRNAs, forming tRNA-cmnm(5)s(2)U34. The protein is tRNA modification GTPase MnmE of Phocaeicola vulgatus (strain ATCC 8482 / DSM 1447 / JCM 5826 / CCUG 4940 / NBRC 14291 / NCTC 11154) (Bacteroides vulgatus).